The primary structure comprises 509 residues: MSLHLKPGQLTLADLRQAYLAPVRLSLDPSADAPIAASVACVENIIAEGRTAYGINTGFGLLASTRISPADLEKLQRSIVLSHAAGVGEALDDAMVRLVMLLKVNSLARGFSGIRRKVIDALIALINAEVYPHIPLKGSVGASGDLAPLAHMSLVLIGESRARHRGEWLPAAEALAVAGLEPLTLAAKEGLALLNGTQVSTAYALRGLFEAEDLFAAATVCGGLSVEAMLGSRAPFDARIHAARGQRGQIDVAAAYRDLLTASSEVARSHEKCDKVQDPYSLRCQPQVMGACLTQMRQAAEVLEIEANAVSDNPLVFAAEGDVISGGNFHAEPVAMAADNLALALAEIGSLSERRISLMMDMHMSQLPPFLVANGGVNSGFMIAQVTAAALASDNKALAHPASVDSLPTSANQEDHVSMAPNAGKRLWAMAENVRGILAVEWLGACQGLDFREGLKSSPKLEQARRLLRDKVPYYQEDRFFAPDIEAASQLLASGCLNALLPARLLPSL.

Residues 142-144 (ASG) constitute a cross-link (5-imidazolinone (Ala-Gly)). At Ser143 the chain carries 2,3-didehydroalanine (Ser).

This sequence belongs to the PAL/histidase family. Post-translationally, contains an active site 4-methylidene-imidazol-5-one (MIO), which is formed autocatalytically by cyclization and dehydration of residues Ala-Ser-Gly.

Its subcellular location is the cytoplasm. It catalyses the reaction L-histidine = trans-urocanate + NH4(+). It functions in the pathway amino-acid degradation; L-histidine degradation into L-glutamate; N-formimidoyl-L-glutamate from L-histidine: step 1/3. In Pseudomonas aeruginosa (strain LESB58), this protein is Histidine ammonia-lyase.